Reading from the N-terminus, the 201-residue chain is Large ribosomal subunit protein bL25 (201 aa).

It belongs to the bacterial ribosomal protein bL25 family. CTC subfamily. As to quaternary structure, part of the 50S ribosomal subunit; part of the 5S rRNA/L5/L18/L25 subcomplex. Contacts the 5S rRNA. Binds to the 5S rRNA independently of L5 and L18.

Functionally, this is one of the proteins that binds to the 5S RNA in the ribosome where it forms part of the central protuberance. This is Large ribosomal subunit protein bL25 from Thiobacillus denitrificans (strain ATCC 25259 / T1).